The primary structure comprises 154 residues: Myoglobin (154 aa).

In terms of domain architecture, Globin spans Gly-2–Lys-148. Ser-4 is subject to Phosphoserine. His-65 is a nitrite binding site. O2 is bound at residue His-65. Position 94 (His-94) interacts with heme b.

Belongs to the globin family. In terms of assembly, monomeric.

It is found in the cytoplasm. Its subcellular location is the sarcoplasm. It catalyses the reaction Fe(III)-heme b-[protein] + nitric oxide + H2O = Fe(II)-heme b-[protein] + nitrite + 2 H(+). The enzyme catalyses H2O2 + AH2 = A + 2 H2O. Functionally, monomeric heme protein which primary function is to store oxygen and facilitate its diffusion within muscle tissues. Reversibly binds oxygen through a pentacoordinated heme iron and enables its timely and efficient release as needed during periods of heightened demand. Depending on the oxidative conditions of tissues and cells, and in addition to its ability to bind oxygen, it also has a nitrite reductase activity whereby it regulates the production of bioactive nitric oxide. Under stress conditions, like hypoxia and anoxia, it also protects cells against reactive oxygen species thanks to its pseudoperoxidase activity. In Tachyglossus aculeatus aculeatus (Southeast Australian short-beaked echidna), this protein is Myoglobin (MB).